The sequence spans 359 residues: 4'-phosphopantetheinyl transferase A (359 aa).

It belongs to the P-Pant transferase superfamily.

The catalysed reaction is apo-[ACP] + CoA = holo-[ACP] + adenosine 3',5'-bisphosphate + H(+). With respect to regulation, activity is inhibited bythe antifunfal copmpounds PD 404,182, 6-nitroso-1,2-benzopyrone, and calmidazolium chloride with IC(50) values of 3.9 uM, 35.2 uM, and 19.2 uM, respectively. Its function is as follows. Acyl-carrier-protein synthase that transfers the 4'-phosphopantetheine moiety from coenzyme A to a Ser of an acyl-carrier-protein. The 4'-phosphopantetheine (4'-PPT) portion of CoA provides the essential prosthetic group for a number of carrier proteins and multi-domain enzymes, priming them for the acceptance of acyl building blocks in fatty acid synthesis and many aspects of secondary metabolism mediated by polyketide synthases (PKSs) and non-ribosomal peptide synthetases (NRPSs). PptA is able to transfer the cofactor to a broad range of enzymes with acyl- or peptidyl-carrier protein domains and activates target enzymes involved in the synthesis of lysine, but also secondary metabolites including gliotoxin, fumigaclavine C, fumiquinazole A, fumiquinazoline C, pyripyroprene A, fumagillin, the siderophores triacetylfusarinine C (TAFC) and ferricrocin (FC), and dihydroxy naphthalene (DHN)-melanin. Plays an essential role in virulence. This is 4'-phosphopantetheinyl transferase A from Aspergillus fumigatus (strain ATCC MYA-4609 / CBS 101355 / FGSC A1100 / Af293) (Neosartorya fumigata).